The primary structure comprises 295 residues: Pantothenate synthetase (295 aa).

ATP is bound at residue methionine 29 to histidine 36. The active-site Proton donor is the histidine 36. Glutamine 60 lines the (R)-pantoate pocket. Glutamine 60 is a beta-alanine binding site. Residue glycine 158 to aspartate 161 coordinates ATP. Glutamine 164 provides a ligand contact to (R)-pantoate. ATP is bound by residues valine 187 and leucine 195–arginine 198.

Belongs to the pantothenate synthetase family. As to quaternary structure, homodimer.

The protein localises to the cytoplasm. The catalysed reaction is (R)-pantoate + beta-alanine + ATP = (R)-pantothenate + AMP + diphosphate + H(+). The protein operates within cofactor biosynthesis; (R)-pantothenate biosynthesis; (R)-pantothenate from (R)-pantoate and beta-alanine: step 1/1. Functionally, catalyzes the condensation of pantoate with beta-alanine in an ATP-dependent reaction via a pantoyl-adenylate intermediate. The chain is Pantothenate synthetase from Paenarthrobacter aurescens (strain TC1).